A 92-amino-acid polypeptide reads, in one-letter code: Small ribosomal subunit protein uS19 (92 aa).

This sequence belongs to the universal ribosomal protein uS19 family.

In terms of biological role, protein S19 forms a complex with S13 that binds strongly to the 16S ribosomal RNA. The polypeptide is Small ribosomal subunit protein uS19 (Bacillus cereus (strain B4264)).